Reading from the N-terminus, the 279-residue chain is 4-hydroxy-3-methylbut-2-enyl diphosphate reductase (279 aa).

Cys12 contacts [4Fe-4S] cluster. Residues His40 and His72 each coordinate (2E)-4-hydroxy-3-methylbut-2-enyl diphosphate. The dimethylallyl diphosphate site is built by His40 and His72. Positions 40 and 72 each coordinate isopentenyl diphosphate. [4Fe-4S] cluster is bound at residue Cys94. Residue His122 participates in (2E)-4-hydroxy-3-methylbut-2-enyl diphosphate binding. His122 is a dimethylallyl diphosphate binding site. Residue His122 coordinates isopentenyl diphosphate. Glu124 (proton donor) is an active-site residue. Residue Thr161 coordinates (2E)-4-hydroxy-3-methylbut-2-enyl diphosphate. Position 189 (Cys189) interacts with [4Fe-4S] cluster. The (2E)-4-hydroxy-3-methylbut-2-enyl diphosphate site is built by Ser217, Asn219, and Ser261. Positions 217, 219, and 261 each coordinate dimethylallyl diphosphate. Isopentenyl diphosphate is bound by residues Ser217, Asn219, and Ser261.

This sequence belongs to the IspH family. [4Fe-4S] cluster is required as a cofactor.

The catalysed reaction is isopentenyl diphosphate + 2 oxidized [2Fe-2S]-[ferredoxin] + H2O = (2E)-4-hydroxy-3-methylbut-2-enyl diphosphate + 2 reduced [2Fe-2S]-[ferredoxin] + 2 H(+). It catalyses the reaction dimethylallyl diphosphate + 2 oxidized [2Fe-2S]-[ferredoxin] + H2O = (2E)-4-hydroxy-3-methylbut-2-enyl diphosphate + 2 reduced [2Fe-2S]-[ferredoxin] + 2 H(+). The protein operates within isoprenoid biosynthesis; dimethylallyl diphosphate biosynthesis; dimethylallyl diphosphate from (2E)-4-hydroxy-3-methylbutenyl diphosphate: step 1/1. Its pathway is isoprenoid biosynthesis; isopentenyl diphosphate biosynthesis via DXP pathway; isopentenyl diphosphate from 1-deoxy-D-xylulose 5-phosphate: step 6/6. Catalyzes the conversion of 1-hydroxy-2-methyl-2-(E)-butenyl 4-diphosphate (HMBPP) into a mixture of isopentenyl diphosphate (IPP) and dimethylallyl diphosphate (DMAPP). Acts in the terminal step of the DOXP/MEP pathway for isoprenoid precursor biosynthesis. The chain is 4-hydroxy-3-methylbut-2-enyl diphosphate reductase from Syntrophotalea carbinolica (strain DSM 2380 / NBRC 103641 / GraBd1) (Pelobacter carbinolicus).